A 212-amino-acid chain; its full sequence is MNSIEFPLLDQTTKNSVISTTLNDLSNWSRLSSLWPLLYGTSCCFIEFASLIGSRFDFDRYGLVPRSSPRQADLILTAGTVTMKMAPSLVRLYEQMPEPKYVIAMGACTITGGMFSTDSYSTVRGVDKLIPVDVYLPGCPPKPEAIIDAITKLRKKISREIYENQMSSQRENRCFTTNHKFHIGYSTHTGNYGQELFYQLPSTSEIPSDTFF.

[4Fe-4S] cluster is bound by residues Cys43, Cys44, Cys108, and Cys139.

Belongs to the complex I 20 kDa subunit family. NDH is composed of at least 16 different subunits, 5 of which are encoded in the nucleus. The cofactor is [4Fe-4S] cluster.

Its subcellular location is the plastid. The protein localises to the chloroplast thylakoid membrane. The enzyme catalyses a plastoquinone + NADH + (n+1) H(+)(in) = a plastoquinol + NAD(+) + n H(+)(out). It carries out the reaction a plastoquinone + NADPH + (n+1) H(+)(in) = a plastoquinol + NADP(+) + n H(+)(out). In terms of biological role, NDH shuttles electrons from NAD(P)H:plastoquinone, via FMN and iron-sulfur (Fe-S) centers, to quinones in the photosynthetic chain and possibly in a chloroplast respiratory chain. The immediate electron acceptor for the enzyme in this species is believed to be plastoquinone. Couples the redox reaction to proton translocation, and thus conserves the redox energy in a proton gradient. This Glycine max (Soybean) protein is NAD(P)H-quinone oxidoreductase subunit K, chloroplastic.